Here is an 898-residue protein sequence, read N- to C-terminus: Sodium/hydrogen exchanger 5 (898 aa).

The Cytoplasmic segment spans residues 1–3; that stretch reads MLR. A helical membrane pass occupies residues 4-24; that stretch reads VALLLLPGLPLAGVGATEEPT. At 25–47 the chain is on the extracellular side; it reads QEPGPLGEPPGLALFRWQWHEVE. A helical membrane pass occupies residues 48–68; it reads APYLVALWILVASLAKIVFHL. At 69 to 75 the chain is on the cytoplasmic side; that stretch reads SRKVTSL. Residues 76–96 traverse the membrane as a helical segment; sequence VPESCLLILLGLALGGIVLAV. Over 97-136 the chain is Extracellular; that stretch reads AKKAEYQLEPGTFFLFLLPPIVLDSGYFMPSRLFFDNLGA. A helical transmembrane segment spans residues 137 to 157; the sequence is ILTYAVVGTLWNAFTTGVALW. The Cytoplasmic portion of the chain corresponds to 158-175; the sequence is GLQQAGLVAPRVQAGLLD. The chain crosses the membrane as a helical span at residues 176-196; it reads FLLFGSLISAVDPVAVLAVFE. At 197–202 the chain is on the extracellular side; it reads EVHVNE. N-linked (GlcNAc...) asparagine glycosylation occurs at Asn-201. The helical transmembrane segment at 203–223 threads the bilayer; that stretch reads TLFIIVFGESLLNDAVTVVLY. Over 224 to 248 the chain is Cytoplasmic; it reads KVCNSFVEMGSANVQATDYLKGVAS. A helical membrane pass occupies residues 249 to 269; the sequence is LFVVSLGGAAVGLVFAFLLAL. The Extracellular portion of the chain corresponds to 270–278; sequence TTRFTKRVR. A helical transmembrane segment spans residues 279 to 299; sequence IIEPLLVFLLAYAAYLTAEMA. Topologically, residues 300–333 are cytoplasmic; it reads SLSAILAVTMCGLGCKKYVEANISHKSRTAVKYT. A helical membrane pass occupies residues 334–354; the sequence is MKTLASSAETVIFMLLGISAV. The Extracellular segment spans residues 355-362; it reads DSSKWAWD. A helical transmembrane segment spans residues 363–383; the sequence is SGLVLGTLFFILFFRALGVVL. Residues 384–400 lie on the Cytoplasmic side of the membrane; that stretch reads QTWVLNQFRLVPLDKID. The chain crosses the membrane as a helical span at residues 401 to 421; it reads QVVMSYGGLRGAVAFALVILL. Residues 422–430 are Extracellular-facing; sequence DRTKVPAKD. A helical membrane pass occupies residues 431–451; it reads YFVATTIVVVFFTVIVQGLTI. Topologically, residues 452 to 898 are cytoplasmic; it reads KPLVKWLRVK…CIQFNRGGRL (447 aa). Disordered regions lie at residues 660-692 and 801-888; these read TKSK…RDLG and ESLA…NSHW. Over residues 662–674 the composition is skewed to basic residues; that stretch reads SKPRPRKTGHKKK. Over residues 856–867 the composition is skewed to polar residues; the sequence is ESSADIPQQQEL.

The protein belongs to the monovalent cation:proton antiporter 1 (CPA1) transporter (TC 2.A.36) family. As to quaternary structure, interacts with CHP1 and CHP2. Interacts with ARRB2; facilitates the endocytosis of SLC9A5 from the plasma membrane. Interacts with RACK1; this interaction positively regulates SLC9A5 activity and promotes SLC9A5 localization to focal adhesions. Interacts with SCAMP2; this interaction regulates SLC9A5 cell-surface targeting and SLC9A5 activity. Phosphorylated by PRKAA2; promotes its accumulation at the cell surface. Phosphorylated by CSNK2A1 in a manner favoring its beta-arrestin binding and endocytosis. As to expression, highly expressed in brain. Strongly expressed in the dentate gyrus.

It is found in the cell membrane. Its subcellular location is the recycling endosome membrane. The protein resides in the cell projection. The protein localises to the dendritic spine membrane. It localises to the synaptic cell membrane. It is found in the cell junction. Its subcellular location is the focal adhesion. It catalyses the reaction Na(+)(in) + H(+)(out) = Na(+)(out) + H(+)(in). Its function is as follows. Plasma membrane Na(+)/H(+) antiporter. Mediates the electroneutral exchange of intracellular H(+) ions for extracellular Na(+) in 1:1 stoichiometry. Responsible for regulating intracellular pH homeostasis, in particular in neural tissues. Acts as a negative regulator of dendritic spine growth. Plays a role in postsynaptic remodeling and signaling. Can also contribute to organellar pH regulation, with consequences for receptor tyrosine kinase trafficking. The sequence is that of Sodium/hydrogen exchanger 5 (Slc9a5) from Rattus norvegicus (Rat).